We begin with the raw amino-acid sequence, 164 residues long: UPF0305 protein MJ0646 (164 aa).

This sequence belongs to the UPF0305 family.

The sequence is that of UPF0305 protein MJ0646 from Methanocaldococcus jannaschii (strain ATCC 43067 / DSM 2661 / JAL-1 / JCM 10045 / NBRC 100440) (Methanococcus jannaschii).